A 360-amino-acid chain; its full sequence is 8-hydroxygeraniol dehydrogenase (360 aa).

Cys50, His72, Cys103, Cys106, Cys109, Cys117, and Cys166 together coordinate Zn(2+).

It belongs to the zinc-containing alcohol dehydrogenase family. Requires Zn(2+) as cofactor. Present in seedlings and vascular tissues (at protein level). Restricted to the epidermis.

It catalyses the reaction (6E)-8-hydroxygeraniol + 2 NADP(+) = (6E)-8-oxogeranial + 2 NADPH + 2 H(+). Functionally, dehydrogenase involved in the biosynthesis of oxogeranial from hydroxygeraniol, a precursor of the terpenoid indole alkaloids such as vinblastine and vincristine. This is 8-hydroxygeraniol dehydrogenase (10HGO) from Catharanthus roseus (Madagascar periwinkle).